Here is a 104-residue protein sequence, read N- to C-terminus: Signal recognition particle 19 kDa protein (104 aa).

The protein belongs to the SRP19 family. Part of the signal recognition particle protein translocation system, which is composed of SRP and FtsY. Archaeal SRP consists of a 7S RNA molecule of 300 nucleotides and two protein subunits: SRP54 and SRP19.

The protein localises to the cytoplasm. In terms of biological role, involved in targeting and insertion of nascent membrane proteins into the cytoplasmic membrane. Binds directly to 7S RNA and mediates binding of the 54 kDa subunit of the SRP. The protein is Signal recognition particle 19 kDa protein of Archaeoglobus fulgidus (strain ATCC 49558 / DSM 4304 / JCM 9628 / NBRC 100126 / VC-16).